Reading from the N-terminus, the 182-residue chain is Chromophore lyase CpcS/CpeS (182 aa).

The protein belongs to the CpcS/CpeS biliprotein lyase family.

Covalently attaches a chromophore to Cys residue(s) of phycobiliproteins. The polypeptide is Chromophore lyase CpcS/CpeS (Thermosynechococcus vestitus (strain NIES-2133 / IAM M-273 / BP-1)).